Here is a 313-residue protein sequence, read N- to C-terminus: Deoxyribonucleoside regulator (313 aa).

Positions 23-42 (QQQIAEQLNISRPTVSRLLQ) form a DNA-binding region, H-T-H motif.

Belongs to the SorC transcriptional regulatory family. Homooctamer.

Its function is as follows. Negative regulator of the dra-nupC-pdp operon. DeoR binds cooperatively to the operator DNA, which consists of a palindrome and a direct repeat sequence located 3' to the palindrome. The protein is Deoxyribonucleoside regulator of Bacillus subtilis (strain 168).